The primary structure comprises 480 residues: UDP-N-acetylmuramoylalanine--D-glutamate ligase (480 aa).

Residue 127 to 133 participates in ATP binding; that stretch reads GTNGKTT.

This sequence belongs to the MurCDEF family.

Its subcellular location is the cytoplasm. It catalyses the reaction UDP-N-acetyl-alpha-D-muramoyl-L-alanine + D-glutamate + ATP = UDP-N-acetyl-alpha-D-muramoyl-L-alanyl-D-glutamate + ADP + phosphate + H(+). It functions in the pathway cell wall biogenesis; peptidoglycan biosynthesis. Cell wall formation. Catalyzes the addition of glutamate to the nucleotide precursor UDP-N-acetylmuramoyl-L-alanine (UMA). This Tropheryma whipplei (strain TW08/27) (Whipple's bacillus) protein is UDP-N-acetylmuramoylalanine--D-glutamate ligase.